The chain runs to 192 residues: Thymidine kinase (192 aa).

ATP contacts are provided by residues 9–16 (SAMNAGKS) and 87–90 (DECQ). Glutamate 88 (proton acceptor) is an active-site residue. Positions 145, 147, 182, and 185 each coordinate Zn(2+).

It belongs to the thymidine kinase family. Homotetramer.

Its subcellular location is the cytoplasm. It catalyses the reaction thymidine + ATP = dTMP + ADP + H(+). The polypeptide is Thymidine kinase (Vibrio parahaemolyticus serotype O3:K6 (strain RIMD 2210633)).